The chain runs to 293 residues: Probable 2-(5''-triphosphoribosyl)-3'-dephosphocoenzyme-A synthase (293 aa).

This sequence belongs to the CitG/MdcB family.

It carries out the reaction 3'-dephospho-CoA + ATP = 2'-(5''-triphospho-alpha-D-ribosyl)-3'-dephospho-CoA + adenine. In terms of biological role, involved in the formation of 2-(5''-phosphoribosyl)-3'-dephosphocoenzyme-A, the prosthetic group of the acyl-carrier protein of the malonate decarboxylase. The protein is Probable 2-(5''-triphosphoribosyl)-3'-dephosphocoenzyme-A synthase of Pseudomonas paraeruginosa (strain DSM 24068 / PA7) (Pseudomonas aeruginosa (strain PA7)).